A 627-amino-acid chain; its full sequence is Protein fem-1 homolog B (627 aa).

ANK repeat units lie at residues 45 to 74 (QRSTPLIIAARNGHAKVVRLLLEHYRVQTQ), 87 to 116 (DGATALWCAAGAGHFEVVKLLVSHGANVNH), 120 to 149 (TNSTPLRAACFDGRLDIVKYLVENNANISI), and 153 to 182 (YDNTCLMIAAYKGHTDVVRYLLEQRADPNA). Positions 185, 186, and 218 each coordinate Zn(2+). ANK repeat units lie at residues 186–215 (CGATALHFAAEAGHIDIVKELIKWRAAIVV) and 218–248 (HGMTPLKVAAESCKADVVELLLSHADCDRRS). The stretch at 344–377 (SHPIIYRGAVYADNMEFEQCIKLWLHALHLRQKG) is one TPR repeat. ANK repeat units follow at residues 483-527 (EGFT…EVNA) and 531-568 (EGNSALHIIVQYNRPISDFLTLHSIIISLVEAGAHTDM).

It belongs to the fem-1 family. As to quaternary structure, component of a CRL2 E3 ubiquitin-protein ligase complex, also named ECS (Elongin BC-CUL2/5-SOCS-box protein) complex, composed of CUL2, Elongin BC (ELOB and ELOC), RBX1 and substrate-specific adapter FEM1B. Homooligomer. Interacts with PPM1F and PHTF1. Interacts with the death domain of FAS/TNFRSF6 and TNFRSF1A. Interacts with CHEK1. Interacts with NKX3-1. As to expression, widely expressed. Highly expressed in testis. Weakly expressed in other tissues.

The protein localises to the cytoplasm. It localises to the nucleus. It participates in protein modification; protein ubiquitination. Its activity is regulated as follows. Activity of the CRL2(FEM1B) complex toward FNIP1 is inhibited by BEX family proteins (BEX1, BEX2, BEX3, BEX4 and/or BEX5) in absence of reductive stress. Mechanistically, BEX proteins act as pseudosubstrate inhibitors that associate with FEM1B via zinc in absence of reductive stress, thereby preventing association between FEM1B and FNIP1. Functionally, substrate-recognition component of a Cul2-RING (CRL2) E3 ubiquitin-protein ligase complex of the DesCEND (destruction via C-end degrons) pathway, which recognizes a C-degron located at the extreme C terminus of target proteins, leading to their ubiquitination and degradation. The C-degron recognized by the DesCEND pathway is usually a motif of less than ten residues and can be present in full-length proteins, truncated proteins or proteolytically cleaved forms. The CRL2(FEM1B) complex specifically recognizes proteins ending with -Gly-Leu-Asp-Arg, such as CDK5R1, leading to their ubiquitination and degradation. Also acts as a regulator of the reductive stress response by mediating ubiquitination of reduced FNIP1: in response to reductive stress, the CRL2(FEM1B) complex specifically recognizes a conserved Cys degron in FNIP1 when this degron is reduced, leading to FNIP1 degradation and subsequent activation of mitochondria to recalibrate reactive oxygen species (ROS). Mechanistically, recognizes and binds reduced FNIP1 through two interface zinc ions, which act as a molecular glue that recruit reduced FNIP1 to FEM1B. Promotes ubiquitination of GLI1, suppressing GLI1 transcriptional activator activity. Promotes ubiquitination and degradation of ANKRD37. Promotes ubiquitination and degradation of SLBP. Involved in apoptosis by acting as a death receptor-associated protein that mediates apoptosis. Also involved in glucose homeostasis in pancreatic islet. May also act as an adapter/mediator in replication stress-induced signaling that leads to the activation of CHEK1. The polypeptide is Protein fem-1 homolog B (Homo sapiens (Human)).